Consider the following 660-residue polypeptide: Cullin-associated NEDD8-dissociated protein 1 homolog (660 aa).

A Glycyl lysine isopeptide (Lys-Gly) (interchain with G-Cter in NEDD8) cross-link involves residue K16. The disordered stretch occupies residues 339-364; sequence TQNENDHGSDNLIDSDDGFGSDNDPE. Acidic residues predominate over residues 351 to 363; sequence IDSDDGFGSDNDP.

As to quaternary structure, interacts with unneddylated cullin CDC53. Post-translationally, neddylated at Lys-16.

Functionally, assembly factor of SCF (SKP1-CUL1-F-box protein) E3 ubiquitin ligase complexes that promotes the exchange of the substrate-recognition F-box subunit in SCF complexes, thereby playing a key role in the cellular repertoire of SCF complexes. Acts as a F-box protein exchange factor. Involved in the aging process. Longevity-assurance protein. The polypeptide is Cullin-associated NEDD8-dissociated protein 1 homolog (LAG2) (Saccharomyces cerevisiae (strain ATCC 204508 / S288c) (Baker's yeast)).